The sequence spans 647 residues: Threonine--tRNA ligase (647 aa).

The TGS domain maps to 1-63 (MEVRVEGQMV…PAGCTGIEPV (63 aa)). The segment at 244–535 (DHRKLGRELS…LVENFAGALP (292 aa)) is catalytic. Cys336, His387, and His512 together coordinate Zn(2+).

Belongs to the class-II aminoacyl-tRNA synthetase family. As to quaternary structure, homodimer. The cofactor is Zn(2+).

It localises to the cytoplasm. The catalysed reaction is tRNA(Thr) + L-threonine + ATP = L-threonyl-tRNA(Thr) + AMP + diphosphate + H(+). Functionally, catalyzes the attachment of threonine to tRNA(Thr) in a two-step reaction: L-threonine is first activated by ATP to form Thr-AMP and then transferred to the acceptor end of tRNA(Thr). Also edits incorrectly charged L-seryl-tRNA(Thr). This Desulfovibrio desulfuricans (strain ATCC 27774 / DSM 6949 / MB) protein is Threonine--tRNA ligase.